The primary structure comprises 436 residues: Peptidase B (436 aa).

Lys-201 and Asp-206 together coordinate Mn(2+). Lys-213 is a catalytic residue. Residues Asp-224, Asp-283, and Glu-285 each coordinate Mn(2+). The active site involves Arg-287.

The protein belongs to the peptidase M17 family. Homohexamer. Mn(2+) is required as a cofactor.

It localises to the cytoplasm. The catalysed reaction is Release of an N-terminal amino acid, Xaa, from a peptide or arylamide. Xaa is preferably Glu or Asp but may be other amino acids, including Leu, Met, His, Cys and Gln.. In terms of biological role, probably plays an important role in intracellular peptide degradation. This chain is Peptidase B, found in Pectobacterium carotovorum subsp. carotovorum (strain PC1).